Here is a 93-residue protein sequence, read N- to C-terminus: Pyrimidine/purine nucleoside phosphorylase (93 aa).

Belongs to the nucleoside phosphorylase PpnP family.

It carries out the reaction a purine D-ribonucleoside + phosphate = a purine nucleobase + alpha-D-ribose 1-phosphate. It catalyses the reaction adenosine + phosphate = alpha-D-ribose 1-phosphate + adenine. The catalysed reaction is cytidine + phosphate = cytosine + alpha-D-ribose 1-phosphate. The enzyme catalyses guanosine + phosphate = alpha-D-ribose 1-phosphate + guanine. It carries out the reaction inosine + phosphate = alpha-D-ribose 1-phosphate + hypoxanthine. It catalyses the reaction thymidine + phosphate = 2-deoxy-alpha-D-ribose 1-phosphate + thymine. The catalysed reaction is uridine + phosphate = alpha-D-ribose 1-phosphate + uracil. The enzyme catalyses xanthosine + phosphate = alpha-D-ribose 1-phosphate + xanthine. In terms of biological role, catalyzes the phosphorolysis of diverse nucleosides, yielding D-ribose 1-phosphate and the respective free bases. Can use uridine, adenosine, guanosine, cytidine, thymidine, inosine and xanthosine as substrates. Also catalyzes the reverse reactions. The sequence is that of Pyrimidine/purine nucleoside phosphorylase from Shewanella halifaxensis (strain HAW-EB4).